The sequence spans 459 residues: Bifunctional protein GlmU (459 aa).

Residues 1–230 are pyrophosphorylase; the sequence is MVKRYAVILA…FEETIGVNDR (230 aa). Residues 9–12, Lys23, Gln73, and 78–79 each bind UDP-N-acetyl-alpha-D-glucosamine; these read LAAG and GT. Asp103 provides a ligand contact to Mg(2+). 4 residues coordinate UDP-N-acetyl-alpha-D-glucosamine: Gly140, Glu155, Asn170, and Asn228. Asn228 provides a ligand contact to Mg(2+). The segment at 231-251 is linker; that stretch reads VALAEAEKIMRERICRKHMMN. Residues 252–459 are N-acetyltransferase; that stretch reads GVTIIDPAHT…VDRLSIKKNS (208 aa). UDP-N-acetyl-alpha-D-glucosamine is bound by residues Arg333 and Lys351. The Proton acceptor role is filled by His363. Residues Tyr366 and Asn377 each coordinate UDP-N-acetyl-alpha-D-glucosamine. Residues 386–387, Ala423, and Arg440 contribute to the acetyl-CoA site; that span reads NY.

It in the N-terminal section; belongs to the N-acetylglucosamine-1-phosphate uridyltransferase family. The protein in the C-terminal section; belongs to the transferase hexapeptide repeat family. As to quaternary structure, homotrimer. Mg(2+) is required as a cofactor.

It localises to the cytoplasm. It catalyses the reaction alpha-D-glucosamine 1-phosphate + acetyl-CoA = N-acetyl-alpha-D-glucosamine 1-phosphate + CoA + H(+). The catalysed reaction is N-acetyl-alpha-D-glucosamine 1-phosphate + UTP + H(+) = UDP-N-acetyl-alpha-D-glucosamine + diphosphate. The protein operates within nucleotide-sugar biosynthesis; UDP-N-acetyl-alpha-D-glucosamine biosynthesis; N-acetyl-alpha-D-glucosamine 1-phosphate from alpha-D-glucosamine 6-phosphate (route II): step 2/2. Its pathway is nucleotide-sugar biosynthesis; UDP-N-acetyl-alpha-D-glucosamine biosynthesis; UDP-N-acetyl-alpha-D-glucosamine from N-acetyl-alpha-D-glucosamine 1-phosphate: step 1/1. It functions in the pathway bacterial outer membrane biogenesis; LPS lipid A biosynthesis. Functionally, catalyzes the last two sequential reactions in the de novo biosynthetic pathway for UDP-N-acetylglucosamine (UDP-GlcNAc). The C-terminal domain catalyzes the transfer of acetyl group from acetyl coenzyme A to glucosamine-1-phosphate (GlcN-1-P) to produce N-acetylglucosamine-1-phosphate (GlcNAc-1-P), which is converted into UDP-GlcNAc by the transfer of uridine 5-monophosphate (from uridine 5-triphosphate), a reaction catalyzed by the N-terminal domain. The protein is Bifunctional protein GlmU of Geobacillus sp. (strain WCH70).